We begin with the raw amino-acid sequence, 369 residues long: Deacetylase EF_0837 (369 aa).

6 residues coordinate Zn(2+): histidine 58, histidine 60, lysine 152, histidine 186, histidine 209, and aspartate 270. Lysine 152 is modified (N6-carboxylysine).

It belongs to the metallo-dependent hydrolases superfamily. Atu3266/EF_0837 deacetylase family. Zn(2+) is required as a cofactor.

Functionally, esterase that can catalyze the deacetylation of acetyl-(R)-mandelate, but with very low efficiency (in vitro). In Enterococcus faecalis (strain ATCC 700802 / V583), this protein is Deacetylase EF_0837.